Reading from the N-terminus, the 165-residue chain is uncharacterized protein (165 aa).

This is an uncharacterized protein from Escherichia coli (strain K12).